The sequence spans 119 residues: Ribonuclease P protein component (119 aa).

The protein belongs to the RnpA family. In terms of assembly, consists of a catalytic RNA component (M1 or rnpB) and a protein subunit.

The catalysed reaction is Endonucleolytic cleavage of RNA, removing 5'-extranucleotides from tRNA precursor.. RNaseP catalyzes the removal of the 5'-leader sequence from pre-tRNA to produce the mature 5'-terminus. It can also cleave other RNA substrates such as 4.5S RNA. The protein component plays an auxiliary but essential role in vivo by binding to the 5'-leader sequence and broadening the substrate specificity of the ribozyme. The polypeptide is Ribonuclease P protein component (Citrobacter koseri (strain ATCC BAA-895 / CDC 4225-83 / SGSC4696)).